Here is a 261-residue protein sequence, read N- to C-terminus: Early 39 kDa protein (261 aa).

The disordered stretch occupies residues 215–261; sequence SYVPTPVSNKKRRAPPSAPKKIAKQRRDTKPPPTYVSDNTQDTNMSE. A compositionally biased stretch (polar residues) spans 250-261; the sequence is VSDNTQDTNMSE.

This chain is Early 39 kDa protein, found in Orgyia pseudotsugata multicapsid polyhedrosis virus (OpMNPV).